The primary structure comprises 71 residues: uncharacterized protein (71 aa).

The chain crosses the membrane as a helical span at residues 24 to 44; the sequence is FGGGGLSTAIYSIFAFFSIPL.

The protein localises to the membrane. This is an uncharacterized protein from Schizosaccharomyces pombe (strain 972 / ATCC 24843) (Fission yeast).